The primary structure comprises 113 residues: ATP synthase epsilon chain (113 aa).

Belongs to the ATPase epsilon chain family. As to quaternary structure, F-type ATPases have 2 components, CF(1) - the catalytic core - and CF(0) - the membrane proton channel. CF(1) has five subunits: alpha(3), beta(3), gamma(1), delta(1), epsilon(1). CF(0) has three main subunits: a, b and c.

The protein localises to the cell membrane. Its function is as follows. Produces ATP from ADP in the presence of a proton gradient across the membrane. The chain is ATP synthase epsilon chain from Wolbachia pipientis subsp. Culex pipiens (strain wPip).